The sequence spans 404 residues: Na(+)/H(+) antiporter NhaA 2 (404 aa).

Helical transmembrane passes span 24-44 (GIIL…SFSG), 67-87 (VLHW…GMEI), 103-123 (ILPI…YALF), 132-152 (GWGI…SLVA), 161-181 (VFLT…IAIF), 184-204 (SQIS…LILA), 216-236 (IILG…ATIA), 266-286 (TPWS…GIII), 303-323 (IIFG…FILI), 339-359 (LYGA…VSSL), and 372-392 (MCIM…FKFI).

The protein belongs to the NhaA Na(+)/H(+) (TC 2.A.33) antiporter family.

Its subcellular location is the cell membrane. It catalyses the reaction Na(+)(in) + 2 H(+)(out) = Na(+)(out) + 2 H(+)(in). Na(+)/H(+) antiporter that extrudes sodium in exchange for external protons. This chain is Na(+)/H(+) antiporter NhaA 2, found in Clostridium beijerinckii (strain ATCC 51743 / NCIMB 8052) (Clostridium acetobutylicum).